We begin with the raw amino-acid sequence, 373 residues long: Chaperone protein DnaJ (373 aa).

Residues 5–70 (DYYEVLGLQK…EKKSNYDQFG (66 aa)) enclose the J domain. The CR-type zinc finger occupies 132-214 (GVEKEITVNR…CRGNGNVRKT (83 aa)). Zn(2+)-binding residues include C145, C148, C162, C165, C188, C191, C202, and C205. CXXCXGXG motif repeat units lie at residues 145–152 (CEHCNGSG), 162–169 (CPTCSGTG), 188–195 (CDRCSGTG), and 202–209 (CTHCRGNG).

This sequence belongs to the DnaJ family. As to quaternary structure, homodimer. The cofactor is Zn(2+).

The protein resides in the cytoplasm. Functionally, participates actively in the response to hyperosmotic and heat shock by preventing the aggregation of stress-denatured proteins and by disaggregating proteins, also in an autonomous, DnaK-independent fashion. Unfolded proteins bind initially to DnaJ; upon interaction with the DnaJ-bound protein, DnaK hydrolyzes its bound ATP, resulting in the formation of a stable complex. GrpE releases ADP from DnaK; ATP binding to DnaK triggers the release of the substrate protein, thus completing the reaction cycle. Several rounds of ATP-dependent interactions between DnaJ, DnaK and GrpE are required for fully efficient folding. Also involved, together with DnaK and GrpE, in the DNA replication of plasmids through activation of initiation proteins. The polypeptide is Chaperone protein DnaJ (Clostridium botulinum (strain Eklund 17B / Type B)).